A 185-amino-acid polypeptide reads, in one-letter code: Ribosome-recycling factor (185 aa).

This sequence belongs to the RRF family.

It is found in the cytoplasm. Functionally, responsible for the release of ribosomes from messenger RNA at the termination of protein biosynthesis. May increase the efficiency of translation by recycling ribosomes from one round of translation to another. The polypeptide is Ribosome-recycling factor (Wolbachia pipientis subsp. Culex pipiens (strain wPip)).